We begin with the raw amino-acid sequence, 360 residues long: E3 ubiquitin-protein ligase RNF146 (360 aa).

The RING-type zinc-finger motif lies at 37 to 75; sequence CAICLQTCVHPVSLPCKHVFCYLCVKGASWLGKRCALCR. Residues lysine 85 and lysine 95 each participate in a glycyl lysine isopeptide (Lys-Gly) (interchain with G-Cter in ubiquitin) cross-link. The WWE domain occupies 92 to 168; the sequence is EELKAASRGN…EHGRRRKIKR (77 aa). Residues tyrosine 108, arginine 111, and tryptophan 115 each contribute to the a glycoprotein site. A Glycyl lysine isopeptide (Lys-Gly) (interchain with G-Cter in ubiquitin) cross-link involves residue lysine 131. 4 residues coordinate a glycoprotein: tyrosine 145, glutamine 154, arginine 164, and lysine 176. Lysine 176 participates in a covalent cross-link: Glycyl lysine isopeptide (Lys-Gly) (interchain with G-Cter in ubiquitin). Residues 259–360 form a disordered region; that stretch reads ERSHRGEGEE…PDGQCTVTEV (102 aa). Acidic residues predominate over residues 284 to 294; that stretch reads SIEETESDASS. Phosphoserine is present on residues serine 290 and serine 294. The segment covering 295 to 305 has biased composition (low complexity); that stretch reads DSENVSSAVVA. Positions 307–333 are enriched in polar residues; that stretch reads HSLTQQRLLVSNANQTVSDRSDQSGTD.

Can form homooligomers. Interacts with PARsylated AXIN1, AXIN2, BLZF1, CASC3, H1-2, IPO7, LIG3, NCL, PARP1, XRCC1, XRCC5 and XRCC6. Interacts with DDB1, DHX15, IQGAP1, LRPPRC, PARP2, PRKDC, RUVBL2, TNKS1 and TNKS2. Binding often leads to interactor ubiquitination, in the presence of the appropriate E1 and E2 enzymes, and proteasomal degradation. In terms of processing, ubiquitinated; autoubiquitinated. Autoubiquitination is enhanced upon poly(ADP-ribose)-binding.

The protein localises to the cytoplasm. Its subcellular location is the cytosol. It localises to the nucleus. The catalysed reaction is S-ubiquitinyl-[E2 ubiquitin-conjugating enzyme]-L-cysteine + [acceptor protein]-L-lysine = [E2 ubiquitin-conjugating enzyme]-L-cysteine + N(6)-ubiquitinyl-[acceptor protein]-L-lysine.. It participates in protein modification; protein ubiquitination. Functionally, E3 ubiquitin-protein ligase that specifically binds poly-ADP-ribosylated (PARsylated) proteins and mediates their ubiquitination and subsequent degradation. May regulate many important biological processes, such as cell survival and DNA damage response. Acts as an activator of the Wnt signaling pathway by mediating the ubiquitination of PARsylated AXIN1 and AXIN2, 2 key components of the beta-catenin destruction complex. Acts in cooperation with tankyrase proteins (TNKS and TNKS2), which mediate PARsylation of target proteins AXIN1, AXIN2, BLZF1, CASC3, TNKS and TNKS2. Recognizes and binds tankyrase-dependent PARsylated proteins via its WWE domain and mediates their ubiquitination, leading to their degradation. Different ubiquitin linkage types have been observed: TNKS2 undergoes ubiquitination at 'Lys-48' and 'Lys-63', while AXIN1 is only ubiquitinated at 'Lys-48'. May regulate TNKS and TNKS2 subcellular location, preventing aggregation at a centrosomal location. Neuroprotective protein. Protects the brain against N-methyl-D-aspartate (NMDA) receptor-mediated glutamate excitotoxicity and ischemia, by interfering with PAR-induced cell death, called parthanatos. Prevents nuclear translocation of AIFM1 in a PAR-binding dependent manner. Does not affect PARP1 activation. Protects against cell death induced by DNA damaging agents, such as N-methyl-N-nitro-N-nitrosoguanidine (MNNG) and rescues cells from G1 arrest. Promotes cell survival after gamma-irradiation. Facilitates DNA repair. The protein is E3 ubiquitin-protein ligase RNF146 (RNF146) of Macaca fascicularis (Crab-eating macaque).